We begin with the raw amino-acid sequence, 252 residues long: C4b-binding protein beta chain (252 aa).

A signal peptide spans 1–17; it reads MFFWCACCLMVAWRVSA. Sushi domains lie at 21–78, 79–136, and 137–193; these read EHCP…ECRL, GHCP…ICKS, and RDCD…VCKL. 6 disulfide bridges follow: cysteine 23–cysteine 63, cysteine 49–cysteine 76, cysteine 81–cysteine 121, cysteine 107–cysteine 134, cysteine 139–cysteine 179, and cysteine 165–cysteine 191. 5 N-linked (GlcNAc...) asparagine glycosylation sites follow: asparagine 64, asparagine 71, asparagine 98, asparagine 117, and asparagine 154.

In terms of assembly, disulfide-linked complex of alpha and beta chains of 3 possible sorts: a 570 kDa complex of 7 alpha chains and 1 beta chain, a 530 kDa homoheptamer of alpha chains or a 500 kDa complex of 6 alpha chains and 1 beta chain. The central body of the alpha chain homomer supports tentacles, each with the binding site for C4b at the end.

Its subcellular location is the secreted. Functionally, controls the classical pathway of complement activation. It binds as a cofactor to C3b/C4b inactivator (C3bINA), which then hydrolyzes the complement fragment C4b. It also accelerates the degradation of the C4bC2a complex (C3 convertase) by dissociating the complement fragment C2a. It also interacts with anticoagulant protein S and with serum amyloid P component. The beta chain binds protein S. The sequence is that of C4b-binding protein beta chain (C4BPB) from Homo sapiens (Human).